The chain runs to 229 residues: Allatostatin-A (229 aa).

Positions 1-18 are cleaved as a signal peptide; that stretch reads MLSTSLPVCFLVIGAALC. A propeptide spanning residues 19–48 is cleaved from the precursor; that stretch reads APERMQNDPDPHDSTAQGSDNHSDHIAPLA. The tract at residues 23-46 is disordered; sequence MQNDPDPHDSTAQGSDNHSDHIAP. Leu58 carries the post-translational modification Leucine amide. The propeptide occupies 62 to 80; sequence AYSYVSEYKRLPVYNFGLG. Leu90 is subject to Leucine amide. Positions 94–130 are excised as a propeptide; sequence SVDEDQTNDDQQQIMNNDLDQAALAEFFDQYDDAGYE. Leu140 bears the Leucine amide mark. Positions 144–152 are excised as a propeptide; the sequence is FADDDTSEE. Leu162, Leu173, Leu184, Leu196, and Leu210 each carry leucine amide. Positions 214–229 are excised as a propeptide; the sequence is SADDASTEDSDNYFDV.

The protein belongs to the allatostatin family. As to expression, allatostatin-A-1: Expressed in antennal lobe (AL), corpora cardiaca (CC), corpora allata (CA) and gnathal ganglion (GNG) (at protein level). Expression in AL and GNG detected in most animals, in CC and CA in some animals (at protein level). Allatostatin-A-3: Expressed in antennal lobe (AL), corpora cardiaca (CC), corpora allata (CA) and gnathal ganglion (GNG) (at protein level). Expression in AL detected in all animals, in GNG, CC and CA in most animals (at protein level). Allatostatin-A-4: Expressed in antennal lobe (AL), corpora cardiaca (CC), corpora allata (CA) and gnathal ganglion (GNG) in all animals (at protein level). Allatostatin-A-5: Expressed in antennal lobe (AL), corpora cardiaca (CC), corpora allata (CA) and gnathal ganglion (GNG) in all animals (at protein level). Allatostatin-A-6: Expressed in antennal lobe (AL) and gnathal ganglion (GNG) (at protein level). Expression in AL detected in some animals, in GNG in few animals (at protein level). Not expressed in corpora cardiaca (CC) and corpora allata (CA) (at protein level). Allatostatin-A-7: Expressed in antennal lobe (AL), corpora cardiaca (CC), corpora allata (CA) and gnathal ganglion (GNG) (at protein level). Expression in AL detected in all animals, in GNG, CC and CA in most animals (at protein level). Allatostatin-A-8: Expressed in antennal lobe (AL), corpora cardiaca (CC), corpora allata (CA) and gnathal ganglion (GNG) (at protein level). Expression in AL detected in all animals, in GNG, CC and CA in most animals (at protein level). Allatostatin-A-9: Expressed in antennal lobe (AL), corpora cardiaca (CC), corpora allata (CA) and gnathal ganglion (GNG) (at protein level). Expression in AL detected in all animals, in GNG in most animals and in CC and CA in some animals (at protein level).

The protein localises to the secreted. Functionally, neuropeptide inhibitors of juvenile hormone synthesis and gut muscle contraction. The polypeptide is Allatostatin-A (Agrotis ipsilon (Black cutworm moth)).